The following is a 620-amino-acid chain: 1-deoxy-D-xylulose-5-phosphate synthase (620 aa).

Thiamine diphosphate contacts are provided by residues His80 and 121-123; that span reads GHS. Residue Asp152 participates in Mg(2+) binding. Residues 153–154, Asn181, Tyr288, and Glu370 contribute to the thiamine diphosphate site; that span reads GA. Mg(2+) is bound at residue Asn181.

It belongs to the transketolase family. DXPS subfamily. Homodimer. The cofactor is Mg(2+). Thiamine diphosphate is required as a cofactor.

It catalyses the reaction D-glyceraldehyde 3-phosphate + pyruvate + H(+) = 1-deoxy-D-xylulose 5-phosphate + CO2. It functions in the pathway metabolic intermediate biosynthesis; 1-deoxy-D-xylulose 5-phosphate biosynthesis; 1-deoxy-D-xylulose 5-phosphate from D-glyceraldehyde 3-phosphate and pyruvate: step 1/1. Its function is as follows. Catalyzes the acyloin condensation reaction between C atoms 2 and 3 of pyruvate and glyceraldehyde 3-phosphate to yield 1-deoxy-D-xylulose-5-phosphate (DXP). The polypeptide is 1-deoxy-D-xylulose-5-phosphate synthase (Shigella flexneri).